The primary structure comprises 127 residues: MSIPNNLRYSEEHEWVKTEGNAVVIGITHFAQGELGDIVFVELPEVGATIQADEPFGSVESVKTVSELYAPVSGKVVAVNEELSDQPELVNESPYEGAWMVKVELSDASQVEKLLTAEKYAEMTNQD.

A Lipoyl-binding domain is found at 22-104 (AVVIGITHFA…YEGAWMVKVE (83 aa)). Residue Lys-63 is modified to N6-lipoyllysine.

This sequence belongs to the GcvH family. As to quaternary structure, the glycine cleavage system is composed of four proteins: P, T, L and H. (R)-lipoate serves as cofactor.

In terms of biological role, the glycine cleavage system catalyzes the degradation of glycine. The H protein shuttles the methylamine group of glycine from the P protein to the T protein. Its function is as follows. Is also involved in protein lipoylation via its role as an octanoyl/lipoyl carrier protein intermediate. The protein is Glycine cleavage system H protein of Bacillus mycoides (strain KBAB4) (Bacillus weihenstephanensis).